Reading from the N-terminus, the 135-residue chain is Ribonuclease P protein component 2 (135 aa).

The protein belongs to the eukaryotic/archaeal RNase P protein component 2 family. As to quaternary structure, consists of a catalytic RNA component and at least 4-5 protein subunits.

The protein localises to the cytoplasm. It catalyses the reaction Endonucleolytic cleavage of RNA, removing 5'-extranucleotides from tRNA precursor.. Functionally, part of ribonuclease P, a protein complex that generates mature tRNA molecules by cleaving their 5'-ends. The chain is Ribonuclease P protein component 2 from Methanosarcina barkeri (strain Fusaro / DSM 804).